The primary structure comprises 684 residues: Transcriptional regulatory protein RCO1 (684 aa).

Met1 is modified (N-acetylmethionine). A disordered region spans residues Met1–Leu48. Over residues Arg10–Ser29 the composition is skewed to low complexity. Phosphoserine is present on Ser68. A PHD-type 1 zinc finger spans residues Glu260–Lys309. The segment at Phe414 to Thr472 adopts a PHD-type 2; atypical zinc-finger fold. Position 683 is a phosphoserine (Ser683).

In terms of assembly, component of the RPD3C(S) complex composed of at least EAF3, RCO1, RPD3, SIN3, and UME1.

It is found in the nucleus. Catalytic component of the RPD3C(S) histone deacetylase complex responsible for the deacetylation of lysine residues on the N-terminal part of the core histones (H2A, H2B, H3 and H4). Histone deacetylation gives a tag for epigenetic repression and plays an important role in transcriptional regulation, cell cycle progression, DNA damage response, osmotic stress response and developmental events. The protein is Transcriptional regulatory protein RCO1 (RCO1) of Saccharomyces cerevisiae (strain ATCC 204508 / S288c) (Baker's yeast).